A 421-amino-acid polypeptide reads, in one-letter code: Histidine--tRNA ligase (421 aa).

The protein belongs to the class-II aminoacyl-tRNA synthetase family. As to quaternary structure, homodimer.

It is found in the cytoplasm. The catalysed reaction is tRNA(His) + L-histidine + ATP = L-histidyl-tRNA(His) + AMP + diphosphate + H(+). This chain is Histidine--tRNA ligase, found in Natranaerobius thermophilus (strain ATCC BAA-1301 / DSM 18059 / JW/NM-WN-LF).